An 84-amino-acid chain; its full sequence is Large ribosomal subunit protein bL27 (84 aa).

The tract at residues 1-21 (MAHKKGGGSTKNGRDSNPKYL) is disordered.

This sequence belongs to the bacterial ribosomal protein bL27 family.

In Chlorobaculum parvum (strain DSM 263 / NCIMB 8327) (Chlorobium vibrioforme subsp. thiosulfatophilum), this protein is Large ribosomal subunit protein bL27.